The primary structure comprises 34 residues: Photosystem II reaction center protein Psb30 (34 aa).

Residues 6-26 traverse the membrane as a helical segment; sequence VIGQLVSTGAIMLLGPAIIIL.

It belongs to the Psb30/Ycf12 family. As to quaternary structure, PSII is composed of 1 copy each of membrane proteins PsbA, PsbB, PsbC, PsbD, PsbE, PsbF, PsbH, PsbI, PsbJ, PsbK, PsbL, PsbM, PsbT, PsbX, PsbY, PsbZ, Psb30/Ycf12, peripheral proteins of the oxygen-evolving complex and a large number of cofactors. It forms dimeric complexes.

It is found in the plastid. Its subcellular location is the chloroplast thylakoid membrane. Functionally, a core subunit of photosystem II (PSII), probably helps stabilize the reaction center. This chain is Photosystem II reaction center protein Psb30, found in Thalassiosira pseudonana (Marine diatom).